The primary structure comprises 251 residues: Methionine aminopeptidase (251 aa).

Residue His-76 participates in substrate binding. Asp-93, Asp-104, and His-168 together coordinate a divalent metal cation. Substrate is bound at residue His-175. A divalent metal cation is bound by residues Glu-202 and Glu-233.

This sequence belongs to the peptidase M24A family. Methionine aminopeptidase type 1 subfamily. As to quaternary structure, monomer. Co(2+) is required as a cofactor. It depends on Zn(2+) as a cofactor. Mn(2+) serves as cofactor. The cofactor is Fe(2+).

The enzyme catalyses Release of N-terminal amino acids, preferentially methionine, from peptides and arylamides.. In terms of biological role, removes the N-terminal methionine from nascent proteins. The N-terminal methionine is often cleaved when the second residue in the primary sequence is small and uncharged (Met-Ala-, Cys, Gly, Pro, Ser, Thr, or Val). Requires deformylation of the N(alpha)-formylated initiator methionine before it can be hydrolyzed. The protein is Methionine aminopeptidase of Staphylococcus epidermidis (strain ATCC 35984 / DSM 28319 / BCRC 17069 / CCUG 31568 / BM 3577 / RP62A).